Consider the following 427-residue polypeptide: L-cysteine:1D-myo-inositol 2-amino-2-deoxy-alpha-D-glucopyranoside ligase (427 aa).

Position 46 (cysteine 46) interacts with Zn(2+). Residues 46–49, threonine 61, and 84–86 each bind L-cysteinyl-5'-AMP; these read CGIT and NVT. Residues 48–58 carry the 'HIGH' region motif; it reads ITPYDATHMGH. A 'ERGGDP' region motif is present at residues 186–191; the sequence is ERGGDP. An L-cysteinyl-5'-AMP-binding site is contributed by tryptophan 233. Residue cysteine 237 coordinates Zn(2+). 255 to 257 provides a ligand contact to L-cysteinyl-5'-AMP; it reads GSD. Residue histidine 262 participates in Zn(2+) binding. Valine 289 is a binding site for L-cysteinyl-5'-AMP. A 'KMSKS' region motif is present at residues 295–299; the sequence is KMSKS.

Belongs to the class-I aminoacyl-tRNA synthetase family. MshC subfamily. As to quaternary structure, monomer. Requires Zn(2+) as cofactor.

The enzyme catalyses 1D-myo-inositol 2-amino-2-deoxy-alpha-D-glucopyranoside + L-cysteine + ATP = 1D-myo-inositol 2-(L-cysteinylamino)-2-deoxy-alpha-D-glucopyranoside + AMP + diphosphate + H(+). Catalyzes the ATP-dependent condensation of GlcN-Ins and L-cysteine to form L-Cys-GlcN-Ins. The polypeptide is L-cysteine:1D-myo-inositol 2-amino-2-deoxy-alpha-D-glucopyranoside ligase (Catenulispora acidiphila (strain DSM 44928 / JCM 14897 / NBRC 102108 / NRRL B-24433 / ID139908)).